Here is a 220-residue protein sequence, read N- to C-terminus: DNA mismatch repair protein MutH (220 aa).

Belongs to the MutH family.

Its subcellular location is the cytoplasm. Functionally, sequence-specific endonuclease that cleaves unmethylated GATC sequences. It is involved in DNA mismatch repair. The polypeptide is DNA mismatch repair protein MutH (Buchnera aphidicola subsp. Baizongia pistaciae (strain Bp)).